The chain runs to 68 residues: UPF0435 protein SAOUHSC_02093 (68 aa).

The protein belongs to the UPF0435 family.

The protein is UPF0435 protein SAOUHSC_02093 of Staphylococcus aureus (strain NCTC 8325 / PS 47).